The chain runs to 567 residues: MAKNVNSKANGKKSGSVKRALKEKKQPEPEFSDSEDDEVDQEKLVEELDEDFDEVANMLGADVTDPEEKKQSKLERKRKRDEEATAEYTKPEVVDNEDDAQNDKFEDAGLSEPTMRAISDMGFKTMTKVQAKTIPPLLAGKDVLGAAKTGSGKTLAFLIPAIELLYSLKFKPRNGTGVIVVSPTRELALQIFGVARELMAHHTQTFGIVIGGANRRQEAEKLAKGVNLLIATPGRLLDHLQNTQGFVFKNLKALVIDEADRILEIGFEEEMKQIIKILPKEERQSMLFSATQTTKVEDLARISLRPGPLYINVVPETAASTADGLEQGYVVCDSDKRFLLLFSFLKKYSKKKIIVFLSSCNSVKYFGELLNYIDLPVLDLHGKQKQQKRTNTFFEFCNAKQGTLVCTDVAARGLDIPAVDWIIQFDPPDDPRDYIHRVGRTARGSNGKGKSLMFLTPSELGFLRYLKAANVPLNEYEFPTNKIVNIQSQLSKLIKSNYWLHQSAKDGYRSYLQAYASHHLKTVYQIDKLDLVKVAKSFGFDVPPKVNITIGASGKSIEKKHKKQKRA.

The disordered stretch occupies residues 1–109 (MAKNVNSKAN…AQNDKFEDAG (109 aa)). The segment covering 30 to 40 (EFSDSEDDEVD) has biased composition (acidic residues). Residues 35-88 (EDDEVDQEKLVEELDEDFDEVANMLGADVTDPEEKKQSKLERKRKRDEEATAEY) adopt a coiled-coil conformation. Residues 103 to 131 (DKFEDAGLSEPTMRAISDMGFKTMTKVQA) carry the Q motif motif. Residues 134 to 310 (IPPLLAGKDV…RISLRPGPLY (177 aa)) form the Helicase ATP-binding domain. 147–154 (AKTGSGKT) serves as a coordination point for ATP. A DEAD box motif is present at residues 257-260 (DEAD). Positions 324-484 (GLEQGYVVCD…EYEFPTNKIV (161 aa)) constitute a Helicase C-terminal domain.

This sequence belongs to the DEAD box helicase family. DDX18/HAS1 subfamily. As to quaternary structure, associates in the nucleolus with the 60S and pre-60S ribosomal subunits.

It is found in the nucleus. Its subcellular location is the nucleolus. It carries out the reaction ATP + H2O = ADP + phosphate + H(+). Functionally, ATP-dependent RNA helicase involved in 40S ribosomal subunit biogenesis. Required for the processing and cleavage of 35S pre-rRNA at sites A0, A1, and A2, leading to mature 18S rRNA. This Scheffersomyces stipitis (strain ATCC 58785 / CBS 6054 / NBRC 10063 / NRRL Y-11545) (Yeast) protein is ATP-dependent RNA helicase HAS1 (HAS1).